Here is a 267-residue protein sequence, read N- to C-terminus: Cell division protein FtsQ (267 aa).

Over 1-32 the chain is Cytoplasmic; it reads MRKKTSSNKKNTAKKNNNISLHRKLGLIYKKT. A helical membrane pass occupies residues 33–53; it reads ILILKIVLIIFICLFAFTKYF. The Periplasmic portion of the chain corresponds to 54–267; that stretch reads ASLKSYLKTN…DKNKYYIEKY (214 aa). Residues 73 to 141 form the POTRA domain; the sequence is FKLENVIIEG…STIYIKLFER (69 aa).

The protein belongs to the FtsQ/DivIB family. FtsQ subfamily.

It localises to the cell inner membrane. In terms of biological role, essential cell division protein. In Rickettsia bellii (strain RML369-C), this protein is Cell division protein FtsQ.